The chain runs to 388 residues: Succinate--CoA ligase [ADP-forming] subunit beta (388 aa).

In terms of domain architecture, ATP-grasp spans 9 to 244 (KQLFREYGLP…TTQDDEREMH (236 aa)). ATP contacts are provided by residues Lys46, 53–55 (GRG), Glu99, Ser102, and Glu107. Mg(2+) contacts are provided by Asn199 and Asp213. Substrate is bound by residues Asn264 and 321-323 (GIV).

The protein belongs to the succinate/malate CoA ligase beta subunit family. In terms of assembly, heterotetramer of two alpha and two beta subunits. Mg(2+) serves as cofactor.

The catalysed reaction is succinate + ATP + CoA = succinyl-CoA + ADP + phosphate. It carries out the reaction GTP + succinate + CoA = succinyl-CoA + GDP + phosphate. Its pathway is carbohydrate metabolism; tricarboxylic acid cycle; succinate from succinyl-CoA (ligase route): step 1/1. Succinyl-CoA synthetase functions in the citric acid cycle (TCA), coupling the hydrolysis of succinyl-CoA to the synthesis of either ATP or GTP and thus represents the only step of substrate-level phosphorylation in the TCA. The beta subunit provides nucleotide specificity of the enzyme and binds the substrate succinate, while the binding sites for coenzyme A and phosphate are found in the alpha subunit. This Psychromonas ingrahamii (strain DSM 17664 / CCUG 51855 / 37) protein is Succinate--CoA ligase [ADP-forming] subunit beta.